Reading from the N-terminus, the 460-residue chain is 1-aminocyclopropane-1-carboxylate synthase 11 (460 aa).

Residues Glu-45 and Tyr-83 each coordinate substrate. Residue Lys-267 is modified to N6-(pyridoxal phosphate)lysine.

Belongs to the class-I pyridoxal-phosphate-dependent aminotransferase family. Homodimer and heterodimer. In vivo, the relevance of heterodimerization with other ACS enzymes is however unsure. Interacts with GRF3. It depends on pyridoxal 5'-phosphate as a cofactor. In terms of processing, may be processed at its C-terminus. In terms of tissue distribution, expressed in roots.

It carries out the reaction S-adenosyl-L-methionine = 1-aminocyclopropane-1-carboxylate + S-methyl-5'-thioadenosine + H(+). The protein operates within alkene biosynthesis; ethylene biosynthesis via S-adenosyl-L-methionine; ethylene from S-adenosyl-L-methionine: step 1/2. 1-aminocyclopropane-1-carboxylate synthase (ACS) enzymes catalyze the conversion of S-adenosyl-L-methionine (SAM) into 1-aminocyclopropane-1-carboxylate (ACC), a direct precursor of ethylene. The sequence is that of 1-aminocyclopropane-1-carboxylate synthase 11 (ACS11) from Arabidopsis thaliana (Mouse-ear cress).